The sequence spans 308 residues: Tyramine--L-glutamate ligase (308 aa).

The 203-residue stretch at 89-291 (KSLLKSENID…LAELLIKNAN (203 aa)) folds into the ATP-grasp domain. 115 to 192 (TKIIESYPVK…QEFIDGENLS (78 aa)) lines the ATP pocket. 3 residues coordinate Mg(2+): Asp-252, Glu-264, and Asn-266. Asp-252, Glu-264, and Asn-266 together coordinate Mn(2+).

Requires Mg(2+) as cofactor. It depends on Mn(2+) as a cofactor.

It catalyses the reaction tyramine + L-glutamate + ATP = gamma-L-glutamyltyramine + ADP + phosphate + H(+). It functions in the pathway cofactor biosynthesis; methanofuran biosynthesis. Its function is as follows. Catalyzes the formation of an amide bond between tyramine and the gamma carboxy group of L-glutamate. The enzyme also accepts phenylethylamine in vitro. This Methanocaldococcus jannaschii (strain ATCC 43067 / DSM 2661 / JAL-1 / JCM 10045 / NBRC 100440) (Methanococcus jannaschii) protein is Tyramine--L-glutamate ligase (mfnD).